A 365-amino-acid polypeptide reads, in one-letter code: Sulfate/thiosulfate import ATP-binding protein CysA (365 aa).

The 235-residue stretch at Ile3–Met237 folds into the ABC transporter domain. Gly35–Thr42 is an ATP binding site.

The protein belongs to the ABC transporter superfamily. Sulfate/tungstate importer (TC 3.A.1.6) family. In terms of assembly, the complex is composed of two ATP-binding proteins (CysA), two transmembrane proteins (CysT and CysW) and a solute-binding protein (CysP).

The protein resides in the cell inner membrane. It catalyses the reaction sulfate(out) + ATP + H2O = sulfate(in) + ADP + phosphate + H(+). The catalysed reaction is thiosulfate(out) + ATP + H2O = thiosulfate(in) + ADP + phosphate + H(+). Functionally, part of the ABC transporter complex CysAWTP involved in sulfate/thiosulfate import. Responsible for energy coupling to the transport system. This Escherichia coli (strain K12) protein is Sulfate/thiosulfate import ATP-binding protein CysA.